We begin with the raw amino-acid sequence, 533 residues long: Ribonuclease III domain-containing protein RNC1, chloroplastic (533 aa).

A chloroplast-targeting transit peptide spans 1 to 30; sequence MAPPAMAFQALALGPLPLPLPAARRRRRVR. 2 disordered regions span residues 31-57 and 66-85; these read VLAVAADHTPPPPPSPSSPPEPANSPS and RKKAVSPKKKHPPRRFILKP. Residues 39 to 53 are compositionally biased toward pro residues; it reads TPPPPPSPSSPPEPA. The span at 69-82 shows a compositional bias: basic residues; it reads AVSPKKKHPPRRFI. RNase III domains follow at residues 164-279 and 411-511; these read LLYL…LCFG and EHPR…CVYG.

In terms of assembly, interacts with RNA. Part of large ribonucleo-protein particles that contain CAF1 and/or CAF2.

It localises to the plastid. It is found in the chloroplast. Binds specific group II introns in chloroplasts and facilitates their splicing. Acts on both subgroup IIA and subgroup IIB introns. The substrates of the subgroup II also require the CRM domain proteins CAF1 or CAF2. Binds both single-stranded and double-stranded RNA non-specifically, but lacks endonuclease activity. Required for plastid ribosome biogenesis. The protein is Ribonuclease III domain-containing protein RNC1, chloroplastic of Oryza sativa subsp. japonica (Rice).